The sequence spans 262 residues: Transmembrane protein 270 (262 aa).

5 helical membrane passes run 6 to 26 (LVRS…ALLI), 30 to 50 (AHLY…LLGL), 67 to 87 (PVGR…CLAL), 92 to 112 (LVWA…KWLG), and 127 to 147 (LFLS…LLVW). Residues 226 to 262 (QEAEPQKALGLSSETPPPGPPAPGARPVLPEPGTPGE) are disordered. The segment covering 240-262 (TPPPGPPAPGARPVLPEPGTPGE) has biased composition (pro residues).

The protein resides in the membrane. This Bos taurus (Bovine) protein is Transmembrane protein 270.